A 207-amino-acid polypeptide reads, in one-letter code: Protein FAM177A1 (207 aa).

Met1 bears the N-acetylmethionine mark. At Ser65 the chain carries Phosphoserine. Residue Thr66 is modified to Phosphothreonine. A coiled-coil region spans residues 131–170 (IDEYYRMKKEEEEEEEENRMSEEAERQYQQNKLQADSIVQ). Residues 142 to 176 (EEEEEENRMSEEAERQYQQNKLQADSIVQTDQPET) are disordered. A compositionally biased stretch (polar residues) spans 157–176 (QYQQNKLQADSIVQTDQPET).

It belongs to the FAM177 family.

The polypeptide is Protein FAM177A1 (Fam177a1) (Mus musculus (Mouse)).